A 435-amino-acid polypeptide reads, in one-letter code: Tol-Pal system protein TolB (435 aa).

The N-terminal stretch at 1-28 (MVKCSLIRALMVIAGLIGAAAFTTPANA) is a signal peptide. Positions 288 to 310 (STAAIDTSPSYSPDGARVSFESD) are disordered.

This sequence belongs to the TolB family. The Tol-Pal system is composed of five core proteins: the inner membrane proteins TolA, TolQ and TolR, the periplasmic protein TolB and the outer membrane protein Pal. They form a network linking the inner and outer membranes and the peptidoglycan layer.

It is found in the periplasm. Its function is as follows. Part of the Tol-Pal system, which plays a role in outer membrane invagination during cell division and is important for maintaining outer membrane integrity. In Rhizobium leguminosarum bv. trifolii (strain WSM2304), this protein is Tol-Pal system protein TolB.